The following is a 662-amino-acid chain: Chaperone protein HtpG (662 aa).

The tract at residues 1-352 is a; substrate-binding; sequence MSKQTLSFQA…SADLPLNVSR (352 aa). The tract at residues 353 to 594 is b; it reads ELLQESRDVR…GDGMSTQLAR (242 aa). Residues 382 to 402 form a disordered region; the sequence is HDRHDSPAPQPAEGADRVSDV. Residues 595–662 form a c region; sequence LLKQAGQQAP…YVKRVNALLV (68 aa).

It belongs to the heat shock protein 90 family. Homodimer.

It is found in the cytoplasm. Functionally, molecular chaperone. Has ATPase activity. This Verminephrobacter eiseniae (strain EF01-2) protein is Chaperone protein HtpG.